The sequence spans 167 residues: 2-C-methyl-D-erythritol 2,4-cyclodiphosphate synthase (167 aa).

2 residues coordinate a divalent metal cation: Asp-8 and His-10. 4-CDP-2-C-methyl-D-erythritol 2-phosphate-binding positions include 8–10 and 34–35; these read DIH and HS. His-42 contacts a divalent metal cation. Residues 56–58 and Arg-142 contribute to the 4-CDP-2-C-methyl-D-erythritol 2-phosphate site; that span reads DIG.

It belongs to the IspF family. As to quaternary structure, homotrimer. Requires a divalent metal cation as cofactor.

It carries out the reaction 4-CDP-2-C-methyl-D-erythritol 2-phosphate = 2-C-methyl-D-erythritol 2,4-cyclic diphosphate + CMP. The protein operates within isoprenoid biosynthesis; isopentenyl diphosphate biosynthesis via DXP pathway; isopentenyl diphosphate from 1-deoxy-D-xylulose 5-phosphate: step 4/6. Functionally, involved in the biosynthesis of isopentenyl diphosphate (IPP) and dimethylallyl diphosphate (DMAPP), two major building blocks of isoprenoid compounds. Catalyzes the conversion of 4-diphosphocytidyl-2-C-methyl-D-erythritol 2-phosphate (CDP-ME2P) to 2-C-methyl-D-erythritol 2,4-cyclodiphosphate (ME-CPP) with a corresponding release of cytidine 5-monophosphate (CMP). The protein is 2-C-methyl-D-erythritol 2,4-cyclodiphosphate synthase of Buchnera aphidicola subsp. Schizaphis graminum (strain Sg).